The primary structure comprises 72 residues: Translation initiation factor IF-1 (72 aa).

In terms of domain architecture, S1-like spans 1-72; the sequence is MSKDDSIEFE…TKGRITYRMK (72 aa).

The protein belongs to the IF-1 family. As to quaternary structure, component of the 30S ribosomal translation pre-initiation complex which assembles on the 30S ribosome in the order IF-2 and IF-3, IF-1 and N-formylmethionyl-tRNA(fMet); mRNA recruitment can occur at any time during PIC assembly.

The protein resides in the cytoplasm. One of the essential components for the initiation of protein synthesis. Stabilizes the binding of IF-2 and IF-3 on the 30S subunit to which N-formylmethionyl-tRNA(fMet) subsequently binds. Helps modulate mRNA selection, yielding the 30S pre-initiation complex (PIC). Upon addition of the 50S ribosomal subunit IF-1, IF-2 and IF-3 are released leaving the mature 70S translation initiation complex. This is Translation initiation factor IF-1 from Xanthomonas campestris pv. campestris (strain 8004).